The primary structure comprises 201 residues: 3-isopropylmalate dehydratase small subunit (201 aa).

The protein belongs to the LeuD family. LeuD type 1 subfamily. In terms of assembly, heterodimer of LeuC and LeuD.

The catalysed reaction is (2R,3S)-3-isopropylmalate = (2S)-2-isopropylmalate. Its pathway is amino-acid biosynthesis; L-leucine biosynthesis; L-leucine from 3-methyl-2-oxobutanoate: step 2/4. Catalyzes the isomerization between 2-isopropylmalate and 3-isopropylmalate, via the formation of 2-isopropylmaleate. The sequence is that of 3-isopropylmalate dehydratase small subunit from Agrobacterium fabrum (strain C58 / ATCC 33970) (Agrobacterium tumefaciens (strain C58)).